The following is a 218-amino-acid chain: Large ribosomal subunit protein bL25 (218 aa).

The disordered stretch occupies residues 185–218; the sequence is ARAAEEEAPAAEETTAEPELVRERREPRAEEEEE. The span at 190-200 shows a compositional bias: acidic residues; that stretch reads EEAPAAEETTA. The segment covering 203 to 212 has biased composition (basic and acidic residues); it reads ELVRERREPR.

The protein belongs to the bacterial ribosomal protein bL25 family. CTC subfamily. In terms of assembly, part of the 50S ribosomal subunit; part of the 5S rRNA/L5/L18/L25 subcomplex. Contacts the 5S rRNA. Binds to the 5S rRNA independently of L5 and L18.

This is one of the proteins that binds to the 5S RNA in the ribosome where it forms part of the central protuberance. This Roseiflexus castenholzii (strain DSM 13941 / HLO8) protein is Large ribosomal subunit protein bL25.